Here is a 104-residue protein sequence, read N- to C-terminus: Large ribosomal subunit protein uL24 (104 aa).

The protein belongs to the universal ribosomal protein uL24 family. Part of the 50S ribosomal subunit.

Its function is as follows. One of two assembly initiator proteins, it binds directly to the 5'-end of the 23S rRNA, where it nucleates assembly of the 50S subunit. One of the proteins that surrounds the polypeptide exit tunnel on the outside of the subunit. In Flavobacterium psychrophilum (strain ATCC 49511 / DSM 21280 / CIP 103535 / JIP02/86), this protein is Large ribosomal subunit protein uL24.